The chain runs to 285 residues: Nucleotide-binding protein CD630_34000 (285 aa).

8 to 15 contributes to the ATP binding site; that stretch reads GLSGSGKS. 59–62 contacts GTP; the sequence is DIRG.

The protein belongs to the RapZ-like family.

Functionally, displays ATPase and GTPase activities. The protein is Nucleotide-binding protein CD630_34000 of Clostridioides difficile (strain 630) (Peptoclostridium difficile).